Reading from the N-terminus, the 71-residue chain is DNA gyrase inhibitor YacG (71 aa).

Zn(2+) contacts are provided by C7, C10, C26, and C30.

Belongs to the DNA gyrase inhibitor YacG family. Interacts with GyrB. Zn(2+) is required as a cofactor.

In terms of biological role, inhibits all the catalytic activities of DNA gyrase by preventing its interaction with DNA. Acts by binding directly to the C-terminal domain of GyrB, which probably disrupts DNA binding by the gyrase. The protein is DNA gyrase inhibitor YacG of Shewanella amazonensis (strain ATCC BAA-1098 / SB2B).